The chain runs to 87 residues: uncharacterized protein (87 aa).

To bacteriophage lambda exonuclease exo.

This is an uncharacterized protein from Escherichia coli (strain K12).